Consider the following 97-residue polypeptide: Putative septation protein SpoVG (97 aa).

The protein belongs to the SpoVG family.

Could be involved in septation. This is Putative septation protein SpoVG from Borreliella afzelii (strain PKo) (Borrelia afzelii).